A 261-amino-acid polypeptide reads, in one-letter code: Cytochrome c oxidase subunit 3 (261 aa).

Residues 1–15 (MTHQLHQYHLVDPSP) are Mitochondrial matrix-facing. Residues 16-34 (WPLTGAMGSLLLASGLAVW) traverse the membrane as a helical segment. Topologically, residues 35–40 (FHTNNT) are mitochondrial intermembrane. Residues 41-66 (MLLKFGLLTLLLTMFQWWRDIIREST) form a helical membrane-spanning segment. Residues 67-72 (YQGHHT) lie on the Mitochondrial matrix side of the membrane. The chain crosses the membrane as a helical span at residues 73 to 105 (SGVQKNMRYGMILFITSEVFFFLGFFWALYHVS). Over 106-128 (LVPTPELGAEWPPIGITPLNPME) the chain is Mitochondrial intermembrane. A helical membrane pass occupies residues 129 to 152 (VPLLNTAVLLSSGATITWSHHTMM). Over 153–155 (KGN) the chain is Mitochondrial matrix. The helical transmembrane segment at 156 to 183 (KKEATHALMLTIILGAYFTALQLSEYME) threads the bilayer. Residues 184–190 (TPFTIAD) are Mitochondrial intermembrane-facing. A helical transmembrane segment spans residues 191 to 223 (SVYGSLFFVATGFHGLHVMIGTSFLMVCALRLA). The Mitochondrial matrix segment spans residues 224–232 (KHHFTITHH). A helical transmembrane segment spans residues 233 to 256 (FGYEAAIWYWHFVDIVWLFLYISV). Over 257-261 (YWWGS) the chain is Mitochondrial intermembrane.

This sequence belongs to the cytochrome c oxidase subunit 3 family. In terms of assembly, component of the cytochrome c oxidase (complex IV, CIV), a multisubunit enzyme composed of 14 subunits. The complex is composed of a catalytic core of 3 subunits MT-CO1, MT-CO2 and MT-CO3, encoded in the mitochondrial DNA, and 11 supernumerary subunits COX4I, COX5A, COX5B, COX6A, COX6B, COX6C, COX7A, COX7B, COX7C, COX8 and NDUFA4, which are encoded in the nuclear genome. The complex exists as a monomer or a dimer and forms supercomplexes (SCs) in the inner mitochondrial membrane with NADH-ubiquinone oxidoreductase (complex I, CI) and ubiquinol-cytochrome c oxidoreductase (cytochrome b-c1 complex, complex III, CIII), resulting in different assemblies (supercomplex SCI(1)III(2)IV(1) and megacomplex MCI(2)III(2)IV(2)).

It localises to the mitochondrion inner membrane. It carries out the reaction 4 Fe(II)-[cytochrome c] + O2 + 8 H(+)(in) = 4 Fe(III)-[cytochrome c] + 2 H2O + 4 H(+)(out). In terms of biological role, component of the cytochrome c oxidase, the last enzyme in the mitochondrial electron transport chain which drives oxidative phosphorylation. The respiratory chain contains 3 multisubunit complexes succinate dehydrogenase (complex II, CII), ubiquinol-cytochrome c oxidoreductase (cytochrome b-c1 complex, complex III, CIII) and cytochrome c oxidase (complex IV, CIV), that cooperate to transfer electrons derived from NADH and succinate to molecular oxygen, creating an electrochemical gradient over the inner membrane that drives transmembrane transport and the ATP synthase. Cytochrome c oxidase is the component of the respiratory chain that catalyzes the reduction of oxygen to water. Electrons originating from reduced cytochrome c in the intermembrane space (IMS) are transferred via the dinuclear copper A center (CU(A)) of subunit 2 and heme A of subunit 1 to the active site in subunit 1, a binuclear center (BNC) formed by heme A3 and copper B (CU(B)). The BNC reduces molecular oxygen to 2 water molecules using 4 electrons from cytochrome c in the IMS and 4 protons from the mitochondrial matrix. The protein is Cytochrome c oxidase subunit 3 (MT-CO3) of Lycodon semicarinatus (Ryukyu odd-tooth snake).